Reading from the N-terminus, the 136-residue chain is Nucleoside diphosphate kinase (136 aa).

ATP contacts are provided by Lys-10, Phe-58, Arg-86, Thr-92, Arg-104, and Asn-114. His-117 acts as the Pros-phosphohistidine intermediate in catalysis.

The protein belongs to the NDK family. Homotetramer. Mg(2+) serves as cofactor.

Its subcellular location is the cytoplasm. It carries out the reaction a 2'-deoxyribonucleoside 5'-diphosphate + ATP = a 2'-deoxyribonucleoside 5'-triphosphate + ADP. The enzyme catalyses a ribonucleoside 5'-diphosphate + ATP = a ribonucleoside 5'-triphosphate + ADP. Major role in the synthesis of nucleoside triphosphates other than ATP. The ATP gamma phosphate is transferred to the NDP beta phosphate via a ping-pong mechanism, using a phosphorylated active-site intermediate. In Corynebacterium efficiens (strain DSM 44549 / YS-314 / AJ 12310 / JCM 11189 / NBRC 100395), this protein is Nucleoside diphosphate kinase.